A 435-amino-acid polypeptide reads, in one-letter code: MKTTYVNATIVTMNEQNEVIENGYIIVENDKIIDVNSGEFASDFEVDEVIDMKGKWVLPGLVNTHTHVVMSLLRGIGDDMLLQPWLETRIWPLESQFTPQIAVASTELGLLEMVKSGTTSFSDMFNPIGVDQDAIMETVSRSGMRAAVSRTLFSFGTKEDEKKAIEEAEKYVKRYYNESGMLTTMVAPHSPYTCSTELLEECARIAVENQTMVHIHLSETEREVRDIEAQYGKRPVEYAASCGLFKRSTVIAHGVVLNDNERAFLAEHDVRVAHNPNSNLKLGSGIANVKAMLEAGIKVGIATDSVASNNNLDMFEEMRIATLLQKGIHQDATALPVETALTLATKGAAEVIGMKQTGSLEVGKCADFITIDPSNKPHLQPADEVLSHLVYAASGKDISDVIINGKRVVWNGECKTLDEERIIFEASRYKRGLQR.

Zn(2+) is bound by residues histidine 65 and histidine 67. Residues glutamate 94, arginine 150, and histidine 189 each contribute to the substrate site. Histidine 216 contacts Zn(2+). Substrate contacts are provided by glutamate 219 and aspartate 304. Aspartate 304 contributes to the Zn(2+) binding site.

The protein belongs to the metallo-dependent hydrolases superfamily. MTA/SAH deaminase family. The cofactor is Zn(2+).

It catalyses the reaction S-adenosyl-L-homocysteine + H2O + H(+) = S-inosyl-L-homocysteine + NH4(+). It carries out the reaction S-methyl-5'-thioadenosine + H2O + H(+) = S-methyl-5'-thioinosine + NH4(+). Catalyzes the deamination of 5-methylthioadenosine and S-adenosyl-L-homocysteine into 5-methylthioinosine and S-inosyl-L-homocysteine, respectively. Is also able to deaminate adenosine. The chain is 5-methylthioadenosine/S-adenosylhomocysteine deaminase from Bacillus thuringiensis (strain Al Hakam).